The following is a 315-amino-acid chain: Methionyl-tRNA formyltransferase (315 aa).

113 to 116 provides a ligand contact to (6S)-5,6,7,8-tetrahydrofolate; that stretch reads SILP.

This sequence belongs to the Fmt family.

The catalysed reaction is L-methionyl-tRNA(fMet) + (6R)-10-formyltetrahydrofolate = N-formyl-L-methionyl-tRNA(fMet) + (6S)-5,6,7,8-tetrahydrofolate + H(+). In terms of biological role, attaches a formyl group to the free amino group of methionyl-tRNA(fMet). The formyl group appears to play a dual role in the initiator identity of N-formylmethionyl-tRNA by promoting its recognition by IF2 and preventing the misappropriation of this tRNA by the elongation apparatus. In Vibrio vulnificus (strain YJ016), this protein is Methionyl-tRNA formyltransferase.